The primary structure comprises 213 residues: Regulatory protein RecX (213 aa).

The protein belongs to the RecX family.

It is found in the cytoplasm. In terms of biological role, modulates RecA activity. This is Regulatory protein RecX from Clostridium beijerinckii (strain ATCC 51743 / NCIMB 8052) (Clostridium acetobutylicum).